Consider the following 213-residue polypeptide: High frequency lysogenization protein HflD (213 aa).

Positions 79 to 126 form a coiled coil; the sequence is QGLNAELTRYTLSLMVLERKLSSAKGALDTLGNRINGLQRQLEHFDLQ.

The protein belongs to the HflD family. Interacts with CII protein from phage lambda.

The protein localises to the cytoplasm. It localises to the cell inner membrane. Negative regulator of phage lambda lysogenization. Contributes to the degradation of the phage regulatory protein CII. Acts probably by holding CII on the membrane surface, away from the target promoters, but close to the FtsH protease. The protein is High frequency lysogenization protein HflD of Escherichia coli O127:H6 (strain E2348/69 / EPEC).